The primary structure comprises 195 residues: Probable cobalt-precorrin-6B C(15)-methyltransferase (decarboxylating) (195 aa).

Residues Thr-24, 48-52, Asp-72, and Ala-101 each bind S-adenosyl-L-methionine; that span reads GCGTG.

The protein belongs to the methyltransferase superfamily. Archaeal-type CbiT family.

It carries out the reaction Co-precorrin-6B + S-adenosyl-L-methionine = Co-precorrin-7 + S-adenosyl-L-homocysteine + CO2. It participates in cofactor biosynthesis; adenosylcobalamin biosynthesis; cob(II)yrinate a,c-diamide from sirohydrochlorin (anaerobic route): step 8/10. In terms of biological role, catalyzes the methylation of C-15 in cobalt-precorrin-6B followed by the decarboxylation of C-12 to form cobalt-precorrin-7. The polypeptide is Probable cobalt-precorrin-6B C(15)-methyltransferase (decarboxylating) (Pyrobaculum calidifontis (strain DSM 21063 / JCM 11548 / VA1)).